We begin with the raw amino-acid sequence, 312 residues long: Ribosomal RNA small subunit methyltransferase H (312 aa).

S-adenosyl-L-methionine is bound by residues 35–37 (GGH), Asp54, Phe81, Asp100, and Gln107.

The protein belongs to the methyltransferase superfamily. RsmH family.

The protein resides in the cytoplasm. It carries out the reaction cytidine(1402) in 16S rRNA + S-adenosyl-L-methionine = N(4)-methylcytidine(1402) in 16S rRNA + S-adenosyl-L-homocysteine + H(+). Specifically methylates the N4 position of cytidine in position 1402 (C1402) of 16S rRNA. The sequence is that of Ribosomal RNA small subunit methyltransferase H from Campylobacter jejuni subsp. jejuni serotype O:2 (strain ATCC 700819 / NCTC 11168).